We begin with the raw amino-acid sequence, 208 residues long: Sodium/potassium-transporting ATPase subunit beta-1-interacting protein 2 (208 aa).

4 helical membrane-spanning segments follow: residues 1–23, 35–55, 62–82, and 153–173; these read MGYCSGRCTLIFICGMQLVCVLE, APILANFVHIIIVILGLFGTI, ITGYAVWLVLWVTWNVFVICF, and LQIVLALAGFIYACYVVKCIT.

Belongs to the NKAIN family. Interacts with ATP1B1. In terms of tissue distribution, expressed in fetal brain. Weakly expressed in adult brain and thymus. Not expressed in any other normal tissue examined.

The protein localises to the cell membrane. The polypeptide is Sodium/potassium-transporting ATPase subunit beta-1-interacting protein 2 (NKAIN2) (Homo sapiens (Human)).